A 313-amino-acid chain; its full sequence is tRNA dimethylallyltransferase (313 aa).

9-16 (GPTASGKT) lines the ATP pocket. 11 to 16 (TASGKT) lines the substrate pocket. The interaction with substrate tRNA stretch occupies residues 34–37 (DSMQ).

Belongs to the IPP transferase family. Monomer. It depends on Mg(2+) as a cofactor.

The enzyme catalyses adenosine(37) in tRNA + dimethylallyl diphosphate = N(6)-dimethylallyladenosine(37) in tRNA + diphosphate. Its function is as follows. Catalyzes the transfer of a dimethylallyl group onto the adenine at position 37 in tRNAs that read codons beginning with uridine, leading to the formation of N6-(dimethylallyl)adenosine (i(6)A). This is tRNA dimethylallyltransferase from Acetivibrio thermocellus (strain ATCC 27405 / DSM 1237 / JCM 9322 / NBRC 103400 / NCIMB 10682 / NRRL B-4536 / VPI 7372) (Clostridium thermocellum).